A 357-amino-acid polypeptide reads, in one-letter code: MGGALPPEIVDYMYRNGAFLLFLGFPQASEFGIDYKSWKTGEKFMGLKMIPPGVHFVYCSIKSAPRIGFFHNFKAGEILVKKWNTESETFEDEEVPTDQISEKKRQLKNMDSSLAPYPYENYRSWYGLTDFITADTVERIHPILGRITSQAELVSLETEFMENAEKEHKDSHFRNRVDRENPVRTRFTDQHGLPIMKIREGYEIRFQDIPPLTVSQNRVGIEYSDRLYRLLRALGGDWKQLLAEMQIAFVCFLQGQVFEGFEQWKRIIHLMSCCPNSLGSEKELFMSFIRVLFFQLKECPTDFFVDIVSRDNFLTTTLSMLFANVRDSAHAGDDLKKKTAQFKQYLTNQFKWDFNCD.

This sequence belongs to the AAR2 family.

This is Protein AAR2 homolog from Caenorhabditis elegans.